The following is an 865-amino-acid chain: MQNGANSRSQEYQGVSVDSRYDPQAIETKWQQSWAAAQLDRTPEADDRPKFYALSMFPYPSGNLHMGHVRNYTITDAIARVKRRQGFRVLHAMGWDAFGLPAENAAIDRGVQPADWTYQNVAQMREQLKQLGLSYDWDREVTTCSPDYYRWTQWLFLQFFEAGLAYQKEATVNWDPIDQTVLANEQVDSEGRSWRSGAKVERRQLKQWFLKITDYAEELLQDLDQLTGWPERVRLMQANWIGKSTGAYLEFPIVNSSDRVKVFTTRPDTVYGVSYVVLAPEHPLVTQVTTPEQQTAVAAFAAEVSQTSELERTAEDRPKRGVPTGGFVTNPFTGQAVPIWIADYVLVEYGTGAVMGVPAHDSRDFAFAQRYGLPVQPVIQPTEGAIAEPWPAPFTEAGVMVNSGQFDGLSSTEAKAKIIAFAEEQGWGQAHVQYRLRDWLISRQRYWGCPIPIVHCPDCGPVAAADLPVQLPDSVQFSGRGPSPLAQLEDWVTTTCPSCGKPARRETDTMDTFMCSSWYYLRYSDASNPEIAFTKDKVNDWLPVDQYVGGIEHAILHLLYSRFFTKVLRDRGLLSFDEPFKRLLTQGMVQGLTYKNPKTGKYVPSDRISDPSQPVDPDTGDRLEVFFEKMSKSKYNGVDPARVLDRYGADTARMFILFKAPPEKDLEWDDADVEGQFRFLNRVWRLVQTASQVEATTAADDKAEKDLRRAVHTAIQAFTEDLEEDYQLNTAIAELMKLTNALNDAPMPGSPAYLKGVQTLVLLLAPFAPHIAEELWQQLGGERSVHLEGWPVLDESALIVDEIPLVIQIMGKTRGTITVPASADRDQLQQLAKNSEIAQRWLDGQTIRKVIVVPGKLVNFVIASP.

The short motif at 58–68 (PYPSGNLHMGH) is the 'HIGH' region element. Residues 629–633 (KMSKS) carry the 'KMSKS' region motif. Residue Lys632 participates in ATP binding.

It belongs to the class-I aminoacyl-tRNA synthetase family.

It localises to the cytoplasm. It carries out the reaction tRNA(Leu) + L-leucine + ATP = L-leucyl-tRNA(Leu) + AMP + diphosphate. The protein is Leucine--tRNA ligase of Synechococcus sp. (strain ATCC 27144 / PCC 6301 / SAUG 1402/1) (Anacystis nidulans).